Here is a 285-residue protein sequence, read N- to C-terminus: Probable endonuclease 4 (285 aa).

Residues His-69, His-109, Glu-145, Asp-179, His-182, His-216, Asp-229, His-231, and Glu-261 each contribute to the Zn(2+) site.

Belongs to the AP endonuclease 2 family. Requires Zn(2+) as cofactor.

The enzyme catalyses Endonucleolytic cleavage to 5'-phosphooligonucleotide end-products.. Endonuclease IV plays a role in DNA repair. It cleaves phosphodiester bonds at apurinic or apyrimidinic (AP) sites, generating a 3'-hydroxyl group and a 5'-terminal sugar phosphate. The polypeptide is Probable endonuclease 4 (Yersinia pseudotuberculosis serotype O:1b (strain IP 31758)).